The following is a 269-amino-acid chain: Mitochondrial scaffolding protein 1 (269 aa).

The PDZ domain occupies 49 to 121 (VVEIEKTSKG…HDEAVEVFRS (73 aa)). The tract at residues 143 to 185 (RTQTPTASVSITPQVTPQTRSTQNNTDTPKSMSHSESKSRLTS) is disordered. The segment covering 145 to 174 (QTPTASVSITPQVTPQTRSTQNNTDTPKSM) has biased composition (polar residues). A helical transmembrane segment spans residues 240–262 (WLTEALYVSIGLGALTISGYLAY).

The protein localises to the membrane. Plays a role in the regulation of lifespan in a partially daf-16-mediated manner, and may be involved in regulating the levels of reactive oxygen species production in response to heat stress. The polypeptide is Mitochondrial scaffolding protein 1 (Caenorhabditis elegans).